Reading from the N-terminus, the 320-residue chain is tRNA U34 carboxymethyltransferase (320 aa).

Carboxy-S-adenosyl-L-methionine-binding positions include Lys87, Trp101, Lys106, Gly126, 148 to 150 (EPS), 176 to 177 (VE), Met192, Tyr196, and Arg311.

Belongs to the class I-like SAM-binding methyltransferase superfamily. CmoB family. In terms of assembly, homotetramer.

It carries out the reaction carboxy-S-adenosyl-L-methionine + 5-hydroxyuridine(34) in tRNA = 5-carboxymethoxyuridine(34) in tRNA + S-adenosyl-L-homocysteine + H(+). Its function is as follows. Catalyzes carboxymethyl transfer from carboxy-S-adenosyl-L-methionine (Cx-SAM) to 5-hydroxyuridine (ho5U) to form 5-carboxymethoxyuridine (cmo5U) at position 34 in tRNAs. The polypeptide is tRNA U34 carboxymethyltransferase (Desulfotalea psychrophila (strain LSv54 / DSM 12343)).